Here is a 349-residue protein sequence, read N- to C-terminus: 5-deoxyribose 1-phosphate isomerase (349 aa).

Residues 49–51, Arg-92, and Gln-199 each bind substrate; that span reads RGA. The active-site Proton donor is the Asp-240. Residue 250 to 251 participates in substrate binding; the sequence is NK.

The protein belongs to the EIF-2B alpha/beta/delta subunits family. DrdI subfamily.

The enzyme catalyses 5-deoxy-alpha-D-ribose 1-phosphate = 5-deoxy-D-ribulose 1-phosphate. The protein operates within carbohydrate degradation. Functionally, catalyzes the isomerization of 5-deoxy-alpha-D-ribose 1-phosphate to 5-deoxy-D-ribulose 1-phosphate, as part of a 5-deoxyribose salvage pathway that recycles this toxic radical SAM enzyme by-product to mainstream metabolites. In Clostridium botulinum (strain 657 / Type Ba4), this protein is 5-deoxyribose 1-phosphate isomerase.